The sequence spans 107 residues: ATP-dependent Clp protease adapter protein ClpS (107 aa).

Residues 1–20 form a disordered region; it reads MAQKHEHDTSVITESAPKQK.

This sequence belongs to the ClpS family. As to quaternary structure, binds to the N-terminal domain of the chaperone ClpA.

Involved in the modulation of the specificity of the ClpAP-mediated ATP-dependent protein degradation. The chain is ATP-dependent Clp protease adapter protein ClpS from Myxococcus xanthus (strain DK1622).